We begin with the raw amino-acid sequence, 34 residues long: Brevinin-2Rf (34 aa).

C28 and C34 are oxidised to a cystine.

In terms of tissue distribution, expressed by the skin glands.

The protein localises to the secreted. Antimicrobial peptide. This is Brevinin-2Rf from Pelophylax ridibundus (Marsh frog).